Reading from the N-terminus, the 242-residue chain is MIIEIITIFPSFFKSFCETSIIKRALEQKKVQIKIHDLRIYSSNKHNQVDDSVYGGGVGMLLSFPPFFDCLQKIKTPQSKVILLSPQGQIFNQIHATNFAQKETHLIILCGNYEGVDARILQYIDAEISIGDYVLTGGEIAATVLVDAITRLIPGVIKEQSYLEDSHQQGLLKYPQYTRPQNYFNHVVPTILLSGNHAKIRSWRQKESLKKTLQKRPDLLENKKLTLEQTKLLKEIKQELQK.

Residues G111 and 130–135 (IGDYVL) each bind S-adenosyl-L-methionine.

Belongs to the RNA methyltransferase TrmD family. In terms of assembly, homodimer.

The protein localises to the cytoplasm. It catalyses the reaction guanosine(37) in tRNA + S-adenosyl-L-methionine = N(1)-methylguanosine(37) in tRNA + S-adenosyl-L-homocysteine + H(+). Its function is as follows. Specifically methylates guanosine-37 in various tRNAs. The chain is tRNA (guanine-N(1)-)-methyltransferase from Aster yellows witches'-broom phytoplasma (strain AYWB).